The following is a 66-amino-acid chain: Beta-toxin Cbo1 (66 aa).

The region spanning 1–66 (KEGYLVNHST…VWPLPKKTCN (66 aa)) is the LCN-type CS-alpha/beta domain. 4 disulfide bridges follow: Cys-12–Cys-65, Cys-16–Cys-41, Cys-25–Cys-46, and Cys-29–Cys-48. Asparagine amide is present on Asn-66.

This sequence belongs to the long (4 C-C) scorpion toxin superfamily. Sodium channel inhibitor family. Beta subfamily. As to expression, expressed by the venom gland.

It is found in the secreted. Its function is as follows. Beta toxins bind voltage-independently at site-4 of sodium channels and shift the voltage of activation toward more negative potentials thereby affecting sodium channel activation and promoting spontaneous and repetitive firing. Is active on the human voltage-gated sodium channel Nav1.6/SCN8A when tested at 200 nM. In vivo, is toxic to mice when intraperitoneally injected. The sequence is that of Beta-toxin Cbo1 from Centruroides bonito (Scorpion).